A 390-amino-acid polypeptide reads, in one-letter code: MQLSKNPIKQTRNREKNYTDDFTMKRSVIMAPESPVFFPPPLVFSPTSVKTPLSSPRSSPPKLTMVACPPRKPKETKTTGSDSETVLKRKRPPMLDLTAAPTVASWCSTTRETAEKGAEVVEAEEDGYYSVYCKRGRRGPMEDRYFAAVDRNDDGGYKNAFFGVFDGHGGSKAAEFAAMNLGNNIEAAMASARSGEDGCSMESAIREGYIKTDEDFLKEGSRGGACCVTALISKGELAVSNAGDCRAVMSRGGTAEALTSDHNPSQANELKRIEALGGYVDCCNGVWRIQGTLAVSRGIGDRYLKEWVIAEPETRTLRIKPEFEFLILASDGLWDKVTNQEAVDVVRPYCVGVENPMTLSACKKLAELSVKRGSLDDISLIIIQLQNFLP.

Polar residues predominate over residues 1–10 (MQLSKNPIKQ). Disordered stretches follow at residues 1–20 (MQLS…NYTD) and 40–85 (PPLV…DSET). The span at 44 to 61 (FSPTSVKTPLSSPRSSPP) shows a compositional bias: low complexity. The PPM-type phosphatase domain maps to 128 to 385 (YYSVYCKRGR…DDISLIIIQL (258 aa)). Mn(2+) contacts are provided by Asp-166, Gly-167, Asp-331, and Asp-376.

It belongs to the PP2C family. It depends on Mg(2+) as a cofactor. Mn(2+) is required as a cofactor.

The enzyme catalyses O-phospho-L-seryl-[protein] + H2O = L-seryl-[protein] + phosphate. It catalyses the reaction O-phospho-L-threonyl-[protein] + H2O = L-threonyl-[protein] + phosphate. The chain is Probable protein phosphatase 2C 30 (PP2C5) from Arabidopsis thaliana (Mouse-ear cress).